The primary structure comprises 286 residues: Tungstate-binding protein TupA (286 aa).

The signal sequence occupies residues 1–20 (MKRLLSIITAVMMLALALTG). The N-palmitoyl cysteine moiety is linked to residue Cys21. A lipid anchor (S-diacylglycerol cysteine) is attached at Cys21.

Monomer. The complex is composed of two ATP-binding proteins (TupC), two transmembrane proteins (TupB) and a solute-binding protein (TupA).

Its subcellular location is the cell membrane. In terms of biological role, part of an ABC transporter complex involved in tungstate uptake. Specifically binds tungstate. This is Tungstate-binding protein TupA from Peptoclostridium acidaminophilum (Eubacterium acidaminophilum).